Reading from the N-terminus, the 199-residue chain is Carbon disulfide hydrolase (199 aa).

Positions 36, 91, and 94 each coordinate Zn(2+).

Belongs to the beta-class carbonic anhydrase family. In terms of assembly, exists as both octamers and hexadecamers in solution. The hexadecameric homooligomer may form a catenane, through interactions of two interlocked octameric rings. Requires Zn(2+) as cofactor.

It catalyses the reaction carbon disulfide + 2 H2O = 2 hydrogen sulfide + CO2 + 2 H(+). It participates in sulfur metabolism; hydrogen sulfide biosynthesis. Catalyzes the conversion of carbon disulfide into hydrogen sulfide and carbon dioxide, with carbonyl sulfide as an intermediate. Likely plays a key role in sulfur metabolism that allows A.thiooxidans G8 to grow on carbon disulfide as the main carbon and energy source. Does not show carbonic anhydrase activity (hydration of CO(2) to carbonate). The chain is Carbon disulfide hydrolase from Acidithiobacillus thiooxidans (Thiobacillus thiooxidans).